A 143-amino-acid chain; its full sequence is uncharacterized protein (143 aa).

Positions 50–143 constitute a Rhodanese domain; the sequence is NKEDAVVVDL…GENLPLVRGK (94 aa). The residue at position 91 (Lys91) is an N6-acetyllysine.

This is an uncharacterized protein from Escherichia coli O6:H1 (strain CFT073 / ATCC 700928 / UPEC).